Reading from the N-terminus, the 424-residue chain is Arginine biosynthesis bifunctional protein ArgJ (424 aa).

Substrate contacts are provided by T166, K192, T203, E290, N419, and T424. Residue T203 is the Nucleophile of the active site.

This sequence belongs to the ArgJ family. In terms of assembly, heterotetramer of two alpha and two beta chains.

It localises to the cytoplasm. It carries out the reaction N(2)-acetyl-L-ornithine + L-glutamate = N-acetyl-L-glutamate + L-ornithine. It catalyses the reaction L-glutamate + acetyl-CoA = N-acetyl-L-glutamate + CoA + H(+). The protein operates within amino-acid biosynthesis; L-arginine biosynthesis; L-ornithine and N-acetyl-L-glutamate from L-glutamate and N(2)-acetyl-L-ornithine (cyclic): step 1/1. It functions in the pathway amino-acid biosynthesis; L-arginine biosynthesis; N(2)-acetyl-L-ornithine from L-glutamate: step 1/4. Its function is as follows. Catalyzes two activities which are involved in the cyclic version of arginine biosynthesis: the synthesis of N-acetylglutamate from glutamate and acetyl-CoA as the acetyl donor, and of ornithine by transacetylation between N(2)-acetylornithine and glutamate. This chain is Arginine biosynthesis bifunctional protein ArgJ, found in Colwellia psychrerythraea (strain 34H / ATCC BAA-681) (Vibrio psychroerythus).